The chain runs to 1472 residues: Adhesion G protein-coupled receptor L1 (1472 aa).

An N-terminal signal peptide occupies residues 1–24; that stretch reads MARLAAVLWSLCVTAILVTSATQG. Residues 25-857 lie on the Extracellular side of the membrane; sequence LSRAGLPFGL…EIYQGRINEL (833 aa). In terms of domain architecture, SUEL-type lectin spans 40 to 129; sequence ACEGYPIELR…KYLEVQYDCV (90 aa). 5 disulfide bridges follow: Cys-41/Cys-71, Cys-50/Cys-128, Cys-83/Cys-115, Cys-96/Cys-102, and Cys-140/Cys-322. Glu-42 contributes to the alpha-L-rhamnose binding site. A glycan (N-linked (GlcNAc...) asparagine) is linked at Asn-98. 117-120 provides a ligand contact to alpha-L-rhamnose; it reads GTYK. The Olfactomedin-like domain occupies 139-398; the sequence is VCPGTLQKVL…VVRYSLEFGP (260 aa). The tract at residues 400–468 is disordered; sequence DPSAGPATSP…APAPSTRRPP (69 aa). Low complexity predominate over residues 405–441; sequence PATSPPLSTTTTARPTPLTSTASPAATTPLRRAPLTT. A compositionally biased stretch (pro residues) spans 453–468; that stretch reads DLPPATAPAPSTRRPP. 2 cysteine pairs are disulfide-bonded: Cys-480–Cys-515 and Cys-503–Cys-532. 6 N-linked (GlcNAc...) asparagine glycosylation sites follow: Asn-531, Asn-640, Asn-741, Asn-800, Asn-805, and Asn-826. The GAIN-B domain occupies 669–850; that stretch reads PARFLAAKQN…AVLMAHREIY (182 aa). Disulfide bonds link Cys-801–Cys-832 and Cys-820–Cys-834. A GPS region spans residues 801-850; sequence CSFWNYSERSMLGYWSTQGCRLVESNKTHTTCACSHLTNFAVLMAHREIY. The helical transmembrane segment at 858–878 threads the bilayer; sequence LLSVITWVGIVISLVCLAICI. The Cytoplasmic portion of the chain corresponds to 879 to 892; it reads STFCFLRGLQTDRN. The helical transmembrane segment at 893–913 threads the bilayer; the sequence is TIHKNLCINLFLAELLFLVGI. The Extracellular segment spans residues 914-919; that stretch reads DKTQYE. Residues 920–940 traverse the membrane as a helical segment; it reads IACPIFAGLLHYFFLAAFSWL. Residues 941-963 are Cytoplasmic-facing; it reads CLEGVHLYLLLVEVFESEYSRTK. Residues 964–984 form a helical membrane-spanning segment; it reads YYYLGGYCFPALVVGIAAAID. Over 985–1001 the chain is Extracellular; that stretch reads YRSYGTEKACWLRVDNY. A helical transmembrane segment spans residues 1002 to 1022; that stretch reads FIWSFIGPVSFVIVVNLVFLM. Residues 1023 to 1049 lie on the Cytoplasmic side of the membrane; the sequence is VTLHKMVRSSSVLKPDSSRLDNIKSWA. The helical transmembrane segment at 1050-1070 threads the bilayer; that stretch reads LGAIALLFLLGLTWAFGLLFI. Residues 1071–1074 lie on the Extracellular side of the membrane; that stretch reads NKES. Residues 1075–1095 form a helical membrane-spanning segment; the sequence is VVMAYLFTTFNAFQGVFIFVF. Residues 1096–1472 lie on the Cytoplasmic side of the membrane; the sequence is HCALQKKVHK…DGQMQLVTSL (377 aa). At Arg-1193 the chain carries Omega-N-methylarginine. Position 1219 is a phosphoserine (Ser-1219). 4 disordered regions span residues 1247 to 1271, 1291 to 1325, 1358 to 1427, and 1449 to 1472; these read FNNSYSLRSGDFPPGDGAPEPPRGR, NLRGGSSGAKGPPPPEPPVPPVPGGSGEEEAGGPG, ESES…SRPP, and YLAAPGLEGPGPDGDGQMQLVTSL. 2 stretches are compositionally biased toward pro residues: residues 1301–1313 and 1406–1418; these read GPPPPEPPVPPVP and ALPPPPPAPPGPP. Phosphoserine is present on Ser-1471.

The protein belongs to the G-protein coupled receptor 2 family. Adhesion G-protein coupled receptor (ADGR) subfamily. Forms a heterodimer, consisting of a large extracellular region (p120) non-covalently linked to a seven-transmembrane moiety (p85). Interacts with syntaxin and with proteins of the SHANK family via the PDZ domain. Interacts (via extracellular domain) with FLRT1, FLRT2 and FLRT3 (via extracellular domain). Autoproteolytically cleaved into 2 subunits, an extracellular subunit and a seven-transmembrane subunit. This proteolytic processing takes place early in the biosynthetic pathway, either in the endoplasmic reticulum or in the early compartment of the Golgi apparatus. In terms of tissue distribution, brain-specific expression but low levels are also detected in kidney, lung and spleen.

It localises to the cell membrane. It is found in the cell projection. Its subcellular location is the axon. The protein resides in the growth cone. The protein localises to the synapse. It localises to the presynaptic cell membrane. It is found in the synaptosome. In terms of biological role, calcium-independent receptor of high affinity for alpha-latrotoxin, an excitatory neurotoxin present in black widow spider venom which triggers massive exocytosis from neurons and neuroendocrine cells. Receptor for TENM2 that mediates heterophilic synaptic cell-cell contact and postsynaptic specialization. Receptor probably implicated in the regulation of exocytosis. The chain is Adhesion G protein-coupled receptor L1 from Bos taurus (Bovine).